The primary structure comprises 882 residues: Leucine--tRNA ligase (882 aa).

Positions 43-53 match the 'HIGH' region motif; the sequence is PYPSGNLHMGH. The 'KMSKS' region signature appears at 632-636; sequence TMSKS. Lys-635 provides a ligand contact to ATP.

Belongs to the class-I aminoacyl-tRNA synthetase family.

The protein resides in the cytoplasm. The catalysed reaction is tRNA(Leu) + L-leucine + ATP = L-leucyl-tRNA(Leu) + AMP + diphosphate. This chain is Leucine--tRNA ligase, found in Synechococcus sp. (strain JA-2-3B'a(2-13)) (Cyanobacteria bacterium Yellowstone B-Prime).